A 368-amino-acid polypeptide reads, in one-letter code: Phosphotransferase IIC component GlvC (368 aa).

At 1 to 11 (MLSQIQRFGGA) the chain is on the periplasmic side. The PTS EIIC type-1 domain maps to 1–368 (MLSQIQRFGG…VGNMGGGLID (368 aa)). The chain crosses the membrane as a helical span at residues 12-32 (MFTPVLLFPFAGIVVGLAILL). At 33–59 (QNPMFVGESLTDPNSLFAQIVHIIEEG) the chain is on the cytoplasmic side. The helical transmembrane segment at 60–80 (GWTVFRNMPLIFAVGLPIGLA) threads the bilayer. Over 81-86 (KQAQGR) the chain is Periplasmic. The chain crosses the membrane as a helical span at residues 87–107 (ACLAVMVSFLTWNYFINAMGM). Residues 108 to 129 (TWGSYFGVDFTQDAVAGSGLTM) lie on the Cytoplasmic side of the membrane. Residues 130–150 (MAGIKTLDTSIIGAIIISGIV) form a helical membrane-spanning segment. At 151–173 (TALHNRLFDKKLPVFLGIFQGTS) the chain is on the periplasmic side. A helical transmembrane segment spans residues 174 to 194 (YVVIIAFLVMIPCAWLTLLGW). Topologically, residues 195-198 (PKVQ) are cytoplasmic. Residues 199–221 (MGIESLQAFLRSAGALGVWVYTF) form a helical membrane-spanning segment. The Periplasmic segment spans residues 222–224 (LER). Residues 225–245 (ILIPTGLHHFIYGQFIFGPAA) traverse the membrane as a helical segment. At 246–276 (VEGGIQMYWAQHLQEFSLSAEPLKSLFPEGG) the chain is on the cytoplasmic side. The chain crosses the membrane as a helical span at residues 277–297 (FALHGNSKIFGAVGISLAMYF). At 298–306 (TAAPENRVK) the chain is on the periplasmic side. The helical transmembrane segment at 307 to 327 (VAGLLIPATLTAMLVGITEPL) threads the bilayer. Position 328 (Glu-328) is a topological domain, cytoplasmic. The helical transmembrane segment at 329–349 (FTFLFISPLLFAVHAVLAASM) threads the bilayer. The Periplasmic portion of the chain corresponds to 350–368 (STVMYLFGVVGNMGGGLID).

The protein resides in the cell inner membrane. Its function is as follows. The phosphoenolpyruvate-dependent sugar phosphotransferase system (PTS), a major carbohydrate active -transport system, catalyzes the phosphorylation of incoming sugar substrates concomitant with their translocation across the cell membrane. This operon may be cryptic in wild-type K12 strains. This Escherichia coli (strain K12) protein is Phosphotransferase IIC component GlvC.